Reading from the N-terminus, the 407-residue chain is Leucine-rich repeat-containing protein 42 (407 aa).

LRR repeat units follow at residues 138-159 (VLKSLCLRNRYLLISERLEEIR), 163-184 (SLECLDLYGCRLGDNHELFKYI), 191-211 (SLVKLFMGANCLSDAGLQRLT), 223-243 (NLQLLDLSENHITEKGLRYLT), and 247-268 (TLQKLDLSGTKVMMDVSLKGFF). Positions 360–389 (VQSSPSGETHSTHKSRKRRLSTEEEQSAAP) are disordered.

This sequence belongs to the LRRC42 family.

The sequence is that of Leucine-rich repeat-containing protein 42 (lrrc42) from Danio rerio (Zebrafish).